The primary structure comprises 75 residues: Probable pilin MJ0431 (75 aa).

The propeptide occupies 1–15 (MGKMKILKKLLSKKG). The short motif at 16–24 (QLSMEVGVL) is the QXSXEXXXL element.

Post-translationally, the N-terminus is cleaved by the prepilin peptidase EppA, which recognizes the class III signal sequence.

The protein resides in the secreted. Its subcellular location is the cell surface. It localises to the fimbrium. The polypeptide is Probable pilin MJ0431 (Methanocaldococcus jannaschii (strain ATCC 43067 / DSM 2661 / JAL-1 / JCM 10045 / NBRC 100440) (Methanococcus jannaschii)).